A 465-amino-acid polypeptide reads, in one-letter code: MTSEADDTIAAIASPMTPAPRGIVRLSGHDCIDVLCRMKVLDTDEASGRRPFRSSKTLSLGEPLGAIEVDVMVWPTQRSYTGQPSAELHLIGSAPLLQSSLDAAIRAGARAARPGEFTMRSFLAGRLDLTQAEAVLGVIEAEDRGTLDQALSQLAGNLSRPLQAARSTLLDLLADVEAGLDFVDEDIEFISDEALIQRLDELRSLLLQTRSQLSDRGGASSTIRVVLRGLPNAGKSRLLNVLSRTESAIVTDQAGTTRDLVTVESSWGGHSFQLIDTAGSESREESDPEAPISQEAQLQAAEAARGADVHVWCIDATGGDGFESLKSPNAVLAEAKRSAQLICVATKRDLMPTDWNGESMRADLAVSSESGTGVDSLIERLVQFAEQRDAGETGSVIGTAARCQDSLAAAIEHLAQAIQWTEQAAGHELVAAEMRLAVEAIGEVTGQVYTDDILDRVFGRFCIGK.

3 residues coordinate (6S)-5-formyl-5,6,7,8-tetrahydrofolate: arginine 25, glutamate 87, and arginine 126. The TrmE-type G domain maps to 222–386; that stretch reads TIRVVLRGLP…LIERLVQFAE (165 aa). Residues 232 to 237, 251 to 257, and 276 to 279 each bind GTP; these read NAGKSR, TDQAGTT, and DTAG. Residues serine 236 and threonine 257 each coordinate Mg(2+). Lysine 465 is a (6S)-5-formyl-5,6,7,8-tetrahydrofolate binding site.

The protein belongs to the TRAFAC class TrmE-Era-EngA-EngB-Septin-like GTPase superfamily. TrmE GTPase family. Homodimer. Heterotetramer of two MnmE and two MnmG subunits. K(+) serves as cofactor.

The protein resides in the cytoplasm. In terms of biological role, exhibits a very high intrinsic GTPase hydrolysis rate. Involved in the addition of a carboxymethylaminomethyl (cmnm) group at the wobble position (U34) of certain tRNAs, forming tRNA-cmnm(5)s(2)U34. The polypeptide is tRNA modification GTPase MnmE (Rhodopirellula baltica (strain DSM 10527 / NCIMB 13988 / SH1)).